The primary structure comprises 115 residues: MKFVLLFGVLLVTLFSYSSAEMLDDFDQADEDELLSLIEKEEARAKECTPRFYDCSRDRHSCCRSELFKDVCTCFYPEGGDNEVCTCQQPKHLKYMEKAADKAKKFGGKIKKWFG.

A signal peptide spans 1-20 (MKFVLLFGVLLVTLFSYSSA). Positions 21 to 44 (EMLDDFDQADEDELLSLIEKEEAR) are excised as a propeptide. Disulfide bonds link Cys-48–Cys-63, Cys-55–Cys-72, Cys-62–Cys-87, and Cys-74–Cys-85.

The protein belongs to the neurotoxin 19 (CSTX) family. 01 subfamily. In terms of tissue distribution, expressed by the venom gland.

Its subcellular location is the secreted. This is U3-lycotoxin-Ls1b from Lycosa singoriensis (Wolf spider).